A 263-amino-acid polypeptide reads, in one-letter code: MLHAVTDSSASGPADGQAGAPKFRRVLLKVSGEALMGSQNYGIDIDTADRIAREVAAAVKGGTEMCLVIGGGNIFRGLSGAAKGMDRAAADYMGMLATVMNALAMQTALERIGVQTRVQSAIPMTTVCEPYIRRRATRHMEKGRVVIFAAGTGNPFFTTDTAAALRAAEMGCDALLKGTQVDGVYSDDPRTNPDAERFDQLDYLDVLTRDLRVMDASAVTLMRENAIPIVVFDIHKTNGLARVLAGEGKCTMIGKMKSDAAAV.

Residue 29-32 participates in ATP binding; the sequence is KVSG. Gly71 is a UMP binding site. 2 residues coordinate ATP: Gly72 and Arg76. Residues Asp91 and 152–159 each bind UMP; that span reads TGNPFFTT. Residues Thr179, Gln180, Tyr185, and Asp188 each contribute to the ATP site.

This sequence belongs to the UMP kinase family. In terms of assembly, homohexamer.

The protein localises to the cytoplasm. The enzyme catalyses UMP + ATP = UDP + ADP. It functions in the pathway pyrimidine metabolism; CTP biosynthesis via de novo pathway; UDP from UMP (UMPK route): step 1/1. Inhibited by UTP. Functionally, catalyzes the reversible phosphorylation of UMP to UDP. In Maricaulis maris (strain MCS10) (Caulobacter maris), this protein is Uridylate kinase.